The chain runs to 133 residues: MENQTMSNNIPTELKYVASHEWLRLEEDGTITVGITHHAQELLGDIVFVELPEVGANLAAEEQSGVVESVKAASDVYAPIAGEVVAVNDDLPGAPETANSDPYGAGWFFKIKPANPADYDGLLTAEQYAGEVD.

The 83-residue stretch at 30–112 (TITVGITHHA…YGAGWFFKIK (83 aa)) folds into the Lipoyl-binding domain. Lys71 is modified (N6-lipoyllysine).

This sequence belongs to the GcvH family. The glycine cleavage system is composed of four proteins: P, T, L and H. It depends on (R)-lipoate as a cofactor.

Its function is as follows. The glycine cleavage system catalyzes the degradation of glycine. The H protein shuttles the methylamine group of glycine from the P protein to the T protein. The protein is Glycine cleavage system H protein of Neisseria gonorrhoeae (strain ATCC 700825 / FA 1090).